Reading from the N-terminus, the 158-residue chain is UPF0260 protein RL1394 (158 aa).

The protein belongs to the UPF0260 family.

The sequence is that of UPF0260 protein RL1394 from Rhizobium johnstonii (strain DSM 114642 / LMG 32736 / 3841) (Rhizobium leguminosarum bv. viciae).